Consider the following 300-residue polypeptide: Histone deacetylase HDT3 (300 aa).

Positions E98 to L112 are enriched in acidic residues. Residues E98–K300 form a disordered region. Positions E119–E132 are enriched in basic and acidic residues. The span at D151–T197 shows a compositional bias: acidic residues. Basic and acidic residues predominate over residues P198 to A211. Low complexity predominate over residues S265–P275. The segment at V274–H297 adopts a C2H2-type zinc-finger fold. Residues C279–Q290 show a composition bias toward polar residues.

This sequence belongs to the histone deacetylase HD2 family. In terms of assembly, multimer. Possibly forms a homotrimer with HDT1 and/or HDT2.

It localises to the nucleus. The protein localises to the nucleolus. Mediates the deacetylation of lysine residues on the N-terminal part of the core histones (H2A, H2B, H3 and H4). Histone deacetylation gives a tag for epigenetic repression and plays an important role in transcriptional regulation, cell cycle progression and developmental events. This Zea mays (Maize) protein is Histone deacetylase HDT3 (HDT3).